Consider the following 714-residue polypeptide: Fatty acid oxidation complex subunit alpha (714 aa).

The tract at residues 1–190 (MEMASAFTLN…KLGLVDDVVP (190 aa)) is enoyl-CoA hydratase. Residues 306–714 (APLNSVGILG…FWKTTATDLQ (409 aa)) form a 3-hydroxyacyl-CoA dehydrogenase region.

In the N-terminal section; belongs to the enoyl-CoA hydratase/isomerase family. It in the central section; belongs to the 3-hydroxyacyl-CoA dehydrogenase family. In terms of assembly, heterotetramer of two alpha chains (FadJ) and two beta chains (FadI).

It localises to the cytoplasm. It catalyses the reaction a (3S)-3-hydroxyacyl-CoA = a (2E)-enoyl-CoA + H2O. It carries out the reaction a 4-saturated-(3S)-3-hydroxyacyl-CoA = a (3E)-enoyl-CoA + H2O. The catalysed reaction is a (3S)-3-hydroxyacyl-CoA + NAD(+) = a 3-oxoacyl-CoA + NADH + H(+). The enzyme catalyses (3S)-3-hydroxybutanoyl-CoA = (3R)-3-hydroxybutanoyl-CoA. The protein operates within lipid metabolism; fatty acid beta-oxidation. Its function is as follows. Catalyzes the formation of a hydroxyacyl-CoA by addition of water on enoyl-CoA. Also exhibits 3-hydroxyacyl-CoA epimerase and 3-hydroxyacyl-CoA dehydrogenase activities. The polypeptide is Fatty acid oxidation complex subunit alpha (Escherichia coli (strain ATCC 8739 / DSM 1576 / NBRC 3972 / NCIMB 8545 / WDCM 00012 / Crooks)).